Here is a 364-residue protein sequence, read N- to C-terminus: Alanine racemase (364 aa).

The active-site Proton acceptor; specific for D-alanine is Lys-35. An N6-(pyridoxal phosphate)lysine modification is found at Lys-35. Arg-136 contacts substrate. Tyr-261 (proton acceptor; specific for L-alanine) is an active-site residue. Met-309 lines the substrate pocket.

Belongs to the alanine racemase family. The cofactor is pyridoxal 5'-phosphate.

The enzyme catalyses L-alanine = D-alanine. It functions in the pathway amino-acid biosynthesis; D-alanine biosynthesis; D-alanine from L-alanine: step 1/1. Its function is as follows. Catalyzes the interconversion of L-alanine and D-alanine. May also act on other amino acids. The polypeptide is Alanine racemase (alr) (Shewanella amazonensis (strain ATCC BAA-1098 / SB2B)).